A 235-amino-acid chain; its full sequence is Leucyl/phenylalanyl-tRNA--protein transferase (235 aa).

The protein belongs to the L/F-transferase family.

The protein resides in the cytoplasm. The enzyme catalyses N-terminal L-lysyl-[protein] + L-leucyl-tRNA(Leu) = N-terminal L-leucyl-L-lysyl-[protein] + tRNA(Leu) + H(+). The catalysed reaction is N-terminal L-arginyl-[protein] + L-leucyl-tRNA(Leu) = N-terminal L-leucyl-L-arginyl-[protein] + tRNA(Leu) + H(+). It carries out the reaction L-phenylalanyl-tRNA(Phe) + an N-terminal L-alpha-aminoacyl-[protein] = an N-terminal L-phenylalanyl-L-alpha-aminoacyl-[protein] + tRNA(Phe). Its function is as follows. Functions in the N-end rule pathway of protein degradation where it conjugates Leu, Phe and, less efficiently, Met from aminoacyl-tRNAs to the N-termini of proteins containing an N-terminal arginine or lysine. The polypeptide is Leucyl/phenylalanyl-tRNA--protein transferase (Shewanella frigidimarina (strain NCIMB 400)).